The sequence spans 455 residues: 3-phosphoshikimate 1-carboxyvinyltransferase (455 aa).

The segment covering 1 to 19 (MSHGASSRPATARKSSGLS) has biased composition (polar residues). The segment at 1-25 (MSHGASSRPATARKSSGLSGTVRIP) is disordered. Lys-28 provides a ligand contact to phosphoenolpyruvate. 2 residues coordinate 3-phosphoshikimate: Ser-29 and Arg-33. Phosphoenolpyruvate is bound at residue Arg-128. Positions 173, 174, 175, 326, and 353 each coordinate 3-phosphoshikimate. Gln-175 contacts phosphoenolpyruvate. Asp-326 functions as the Proton acceptor in the catalytic mechanism. Phosphoenolpyruvate contacts are provided by Arg-357 and Arg-405.

It belongs to the EPSP synthase family. Monomer.

The protein resides in the cytoplasm. The enzyme catalyses 3-phosphoshikimate + phosphoenolpyruvate = 5-O-(1-carboxyvinyl)-3-phosphoshikimate + phosphate. Its pathway is metabolic intermediate biosynthesis; chorismate biosynthesis; chorismate from D-erythrose 4-phosphate and phosphoenolpyruvate: step 6/7. Is resistant to inhibition by glyphosate (glyphosate-tolerant) like other members of class II EPSPS, in contrast to class I EPSPS, which is glyphosate-sensitive. Is much less sensitive to inhibition by the (R)-difluoromethyl and (R)-phosphonate analogs of the tetrahedral reaction intermediate than the representative class I EPSPS from E.coli. Is highly activated in the presence of cations, such as NH4(+), Rb(+), and K(+). Its function is as follows. Catalyzes the transfer of the enolpyruvyl moiety of phosphoenolpyruvate (PEP) to the 5-hydroxyl of shikimate-3-phosphate (S3P) to produce enolpyruvyl shikimate-3-phosphate and inorganic phosphate. The sequence is that of 3-phosphoshikimate 1-carboxyvinyltransferase from Agrobacterium sp. (strain CP4).